Here is a 202-residue protein sequence, read N- to C-terminus: LexA repressor (202 aa).

The segment at residues 28-48 is a DNA-binding region (H-T-H motif); the sequence is RAEIAQRLGFRSPNAAEEHLK. Catalysis depends on for autocatalytic cleavage activity residues Ser-119 and Lys-156.

This sequence belongs to the peptidase S24 family. In terms of assembly, homodimer.

The catalysed reaction is Hydrolysis of Ala-|-Gly bond in repressor LexA.. Represses a number of genes involved in the response to DNA damage (SOS response), including recA and lexA. Binds to the 16 bp palindromic sequence 5'-CTGTATATATATACAG-3'. In the presence of single-stranded DNA, RecA interacts with LexA causing an autocatalytic cleavage which disrupts the DNA-binding part of LexA, leading to derepression of the SOS regulon and eventually DNA repair. The sequence is that of LexA repressor from Cronobacter sakazakii (strain ATCC BAA-894) (Enterobacter sakazakii).